The sequence spans 203 residues: Urease accessory protein UreG (203 aa).

14–21 (GPVGSGKT) serves as a coordination point for GTP.

This sequence belongs to the SIMIBI class G3E GTPase family. UreG subfamily. In terms of assembly, homodimer. UreD, UreF and UreG form a complex that acts as a GTP-hydrolysis-dependent molecular chaperone, activating the urease apoprotein by helping to assemble the nickel containing metallocenter of UreC. The UreE protein probably delivers the nickel.

The protein localises to the cytoplasm. In terms of biological role, facilitates the functional incorporation of the urease nickel metallocenter. This process requires GTP hydrolysis, probably effectuated by UreG. This is Urease accessory protein UreG from Rhizobium rhizogenes (strain K84 / ATCC BAA-868) (Agrobacterium radiobacter).